Here is a 360-residue protein sequence, read N- to C-terminus: UDP-N-acetylglucosamine--N-acetylmuramyl-(pentapeptide) pyrophosphoryl-undecaprenol N-acetylglucosamine transferase (360 aa).

UDP-N-acetyl-alpha-D-glucosamine contacts are provided by S198 and Q289.

Belongs to the glycosyltransferase 28 family. MurG subfamily.

The protein localises to the cell membrane. The catalysed reaction is Mur2Ac(oyl-L-Ala-gamma-D-Glu-L-Lys-D-Ala-D-Ala)-di-trans,octa-cis-undecaprenyl diphosphate + UDP-N-acetyl-alpha-D-glucosamine = beta-D-GlcNAc-(1-&gt;4)-Mur2Ac(oyl-L-Ala-gamma-D-Glu-L-Lys-D-Ala-D-Ala)-di-trans,octa-cis-undecaprenyl diphosphate + UDP + H(+). It participates in cell wall biogenesis; peptidoglycan biosynthesis. Functionally, cell wall formation. Catalyzes the transfer of a GlcNAc subunit on undecaprenyl-pyrophosphoryl-MurNAc-pentapeptide (lipid intermediate I) to form undecaprenyl-pyrophosphoryl-MurNAc-(pentapeptide)GlcNAc (lipid intermediate II). The chain is UDP-N-acetylglucosamine--N-acetylmuramyl-(pentapeptide) pyrophosphoryl-undecaprenol N-acetylglucosamine transferase from Streptococcus pyogenes serotype M5 (strain Manfredo).